A 378-amino-acid chain; its full sequence is Carbamoyl phosphate synthase small chain (378 aa).

The segment at 1-188 is CPSase; that stretch reads MSILKEAYLY…THFAYGTSPN (188 aa). Ser49, Gly244, and Gly246 together coordinate L-glutamine. One can recognise a Glutamine amidotransferase type-1 domain in the interval 192 to 378; sequence KVVAIDFGAK…FEEFAKLCCK (187 aa). The active-site Nucleophile is the Cys272. L-glutamine contacts are provided by Leu273, Gln276, Asn314, and Tyr317. Catalysis depends on residues His355 and Glu357.

It belongs to the CarA family. As to quaternary structure, composed of two chains; the small (or glutamine) chain promotes the hydrolysis of glutamine to ammonia, which is used by the large (or ammonia) chain to synthesize carbamoyl phosphate. Tetramer of heterodimers (alpha,beta)4.

It catalyses the reaction hydrogencarbonate + L-glutamine + 2 ATP + H2O = carbamoyl phosphate + L-glutamate + 2 ADP + phosphate + 2 H(+). It carries out the reaction L-glutamine + H2O = L-glutamate + NH4(+). The protein operates within amino-acid biosynthesis; L-arginine biosynthesis; carbamoyl phosphate from bicarbonate: step 1/1. It functions in the pathway pyrimidine metabolism; UMP biosynthesis via de novo pathway; (S)-dihydroorotate from bicarbonate: step 1/3. Small subunit of the glutamine-dependent carbamoyl phosphate synthetase (CPSase). CPSase catalyzes the formation of carbamoyl phosphate from the ammonia moiety of glutamine, carbonate, and phosphate donated by ATP, constituting the first step of 2 biosynthetic pathways, one leading to arginine and/or urea and the other to pyrimidine nucleotides. The small subunit (glutamine amidotransferase) binds and cleaves glutamine to supply the large subunit with the substrate ammonia. The sequence is that of Carbamoyl phosphate synthase small chain from Helicobacter hepaticus (strain ATCC 51449 / 3B1).